A 234-amino-acid polypeptide reads, in one-letter code: Glucosamine-6-phosphate deaminase (234 aa).

Aspartate 63 acts as the Proton acceptor; for enolization step in catalysis. Asparagine 129 serves as the catalytic For ring-opening step. Histidine 131 functions as the Proton acceptor; for ring-opening step in the catalytic mechanism. The active-site For ring-opening step is glutamate 136.

Belongs to the glucosamine/galactosamine-6-phosphate isomerase family. NagB subfamily.

The enzyme catalyses alpha-D-glucosamine 6-phosphate + H2O = beta-D-fructose 6-phosphate + NH4(+). The protein operates within amino-sugar metabolism; N-acetylneuraminate degradation; D-fructose 6-phosphate from N-acetylneuraminate: step 5/5. In terms of biological role, catalyzes the reversible isomerization-deamination of glucosamine 6-phosphate (GlcN6P) to form fructose 6-phosphate (Fru6P) and ammonium ion. The chain is Glucosamine-6-phosphate deaminase from Listeria monocytogenes serotype 4a (strain HCC23).